We begin with the raw amino-acid sequence, 352 residues long: Quinolinate synthase (352 aa).

Residues H48 and S69 each coordinate iminosuccinate. Residue C114 participates in [4Fe-4S] cluster binding. Iminosuccinate is bound by residues 140–142 and S157; that span reads YAN. C201 lines the [4Fe-4S] cluster pocket. Residues 227-229 and T244 contribute to the iminosuccinate site; that span reads HPE. A [4Fe-4S] cluster-binding site is contributed by C298.

The protein belongs to the quinolinate synthase family. Type 1 subfamily. It depends on [4Fe-4S] cluster as a cofactor.

Its subcellular location is the cytoplasm. It catalyses the reaction iminosuccinate + dihydroxyacetone phosphate = quinolinate + phosphate + 2 H2O + H(+). The protein operates within cofactor biosynthesis; NAD(+) biosynthesis; quinolinate from iminoaspartate: step 1/1. Catalyzes the condensation of iminoaspartate with dihydroxyacetone phosphate to form quinolinate. This is Quinolinate synthase from Pseudomonas fluorescens (strain Pf0-1).